The primary structure comprises 189 residues: NAD(P)H-quinone oxidoreductase subunit 6, chloroplastic (189 aa).

5 helical membrane passes run 10–30, 32–52, 61–81, 98–118, and 144–164; these read LSLLLLEIGTIIGALGVVLLP, ILYSGFLLGGVLICIAGIYLL, AQVLIYVGAINVIILFAIMLV, GLSSFICFSFFILLSNMIFDT, and LLPFEIVSVLLLVTLVGAVFI.

It belongs to the complex I subunit 6 family. As to quaternary structure, NDH is composed of at least 16 different subunits, 5 of which are encoded in the nucleus.

It localises to the plastid. The protein localises to the chloroplast thylakoid membrane. It catalyses the reaction a plastoquinone + NADH + (n+1) H(+)(in) = a plastoquinol + NAD(+) + n H(+)(out). The catalysed reaction is a plastoquinone + NADPH + (n+1) H(+)(in) = a plastoquinol + NADP(+) + n H(+)(out). Functionally, NDH shuttles electrons from NAD(P)H:plastoquinone, via FMN and iron-sulfur (Fe-S) centers, to quinones in the photosynthetic chain and possibly in a chloroplast respiratory chain. The immediate electron acceptor for the enzyme in this species is believed to be plastoquinone. Couples the redox reaction to proton translocation, and thus conserves the redox energy in a proton gradient. This Mesostigma viride (Green alga) protein is NAD(P)H-quinone oxidoreductase subunit 6, chloroplastic (ndhG).